A 258-amino-acid chain; its full sequence is MKKTIVFKCGGSVIRELSEEFYQNLKELRASGWKLAIVHGGGPEITNMLKRLNIKTEFSGGQRKTTKPVLEVAEMVLSGSVNKFFVAELAKHGLRAAGISGKDGGLLEADYLDPETYGEVGEIKKVDASMVNALMENGIIPVIAPLSMTSDCKTLNVNADLAASAVAGALEADKLMFVTDVDGIMKEKQRLDVLTPKEIQMLIKQEVITGGMIPKVNSALSALSDQVSEVMIVNGKGSFFAEQTFQGTKIVKAKEAVS.

Substrate contacts are provided by residues 41–42, Arg-63, and Asn-156; that span reads GG.

The protein belongs to the acetylglutamate kinase family. ArgB subfamily.

Its subcellular location is the cytoplasm. The enzyme catalyses N-acetyl-L-glutamate + ATP = N-acetyl-L-glutamyl 5-phosphate + ADP. The protein operates within amino-acid biosynthesis; L-arginine biosynthesis; N(2)-acetyl-L-ornithine from L-glutamate: step 2/4. Its function is as follows. Catalyzes the ATP-dependent phosphorylation of N-acetyl-L-glutamate. This is Acetylglutamate kinase from Bacillus amyloliquefaciens (Bacillus velezensis).